Here is an 82-residue protein sequence, read N- to C-terminus: UPF0512 protein P (82 aa).

This sequence belongs to the UPF0512 family.

This chain is UPF0512 protein P, found in Dictyostelium discoideum (Social amoeba).